The following is a 488-amino-acid chain: Protein kinase C and casein kinase substrate in neurons 2 protein (488 aa).

The F-BAR domain maps to 11 to 282 (VEVSSDSFWE…SIKAADAVED (272 aa)). A coiled-coil region spans residues 25-274 (KRTVKRIDDG…GIYRELEQSI (250 aa)). Residue K53 is modified to N6-acetyllysine. A compositionally biased stretch (basic and acidic residues) spans 163 to 176 (CKEEKLAVSREANS). The disordered stretch occupies residues 163 to 183 (CKEEKLAVSREANSKADPSLN). S273 carries the post-translational modification Phosphoserine. Residue S315 is modified to Phosphoserine; by PKC. Residues 316–429 (RREKKKAADG…PFDEDTTSGT (114 aa)) are disordered. Positions 329 to 364 (TGINQTGDQSGQNKPSSNLSVPSNPAQSTQLQSSYN) are enriched in polar residues. Positions 364–366 (NPF) match the NPF1 motif. At S375 the chain carries Phosphoserine; by IKKB. Residues 386-396 (NVSSYEKTQNY) are compositionally biased toward polar residues. Position 401 is a phosphoserine (S401). The segment covering 406–418 (NNPFSSTDANGDS) has biased composition (polar residues). The NPF2 motif lies at 407–409 (NPF). An NPF3 motif is present at residues 419–421 (NPF). Residues 428 to 488 (GTEVRVRALY…YPANYVEAIQ (61 aa)) form the SH3 domain. The residue at position 448 (S448) is a Phosphoserine.

This sequence belongs to the PACSIN family. In terms of assembly, homodimer. May form heterooligomers with other PACSINs. Interacts (via NPF motifs) with EHD1 (via EH domain). Interacts with EHD3. Interacts (via the SH3 domain) with MICALL1. Interacts with RAC1. Interacts (via SH3 domain) with DNM1, SYN1, SYNJ1 and WASL. Interacts with CAV1. Interacts with TRPV4. Forms a complex with EHD4 and MICALL1; the complex controls CDH5 trafficking and coordinates angiogenesis. In terms of processing, phosphorylated by casein kinase 2 (CK2) and protein kinase C (PKC). Phosphorylation by PKC probably decreases the membrane binding and tubulation capacities of PACSIN2, thereby modulating the lifetime of caveolae. Widely expressed (at protein level). Isoforms 1/3 are predominantly expressed in heart and in PC-12 cells, a pheochromocytoma cell line (at protein level). Isoforms 2/4 are widely expressed with highest levels in muscle, testis and brain (at protein level).

It localises to the cytoplasm. The protein localises to the cytoskeleton. Its subcellular location is the cytoplasmic vesicle membrane. The protein resides in the cell projection. It is found in the ruffle membrane. It localises to the early endosome. The protein localises to the recycling endosome membrane. Its subcellular location is the cell membrane. The protein resides in the membrane. It is found in the caveola. It localises to the cell junction. The protein localises to the adherens junction. In terms of biological role, regulates the morphogenesis and endocytosis of caveolae. Lipid-binding protein that is able to promote the tubulation of the phosphatidic acid-containing membranes it preferentially binds. Plays a role in intracellular vesicle-mediated transport. Involved in the endocytosis of cell-surface receptors like the EGF receptor, contributing to its internalization in the absence of EGF stimulus. Facilitates endothelial front-rear polarity during migration by recruiting EHD4 and MICALL1 to asymmetric adherens junctions between leader and follower cells. This Rattus norvegicus (Rat) protein is Protein kinase C and casein kinase substrate in neurons 2 protein (Pacsin2).